The following is a 564-amino-acid chain: Bifunctional sesquiterpene synthase 1 (564 aa).

Mg(2+)-binding residues include D317, D321, D461, and E469. Residues 317–321 carry the DDXXD motif motif; sequence DDTFD.

It belongs to the terpene synthase family. The cofactor is Mg(2+).

It carries out the reaction (2E,6E)-farnesyl diphosphate = alpha-copaene + diphosphate. It catalyses the reaction (2E,6E)-farnesyl diphosphate = delta-cadinene + diphosphate. It functions in the pathway secondary metabolite biosynthesis; terpenoid biosynthesis. Its function is as follows. Sesquiterpene synthase converting farnesyl diphosphate to alpha copaene and delta-cadinene as the major products. The sequence is that of Bifunctional sesquiterpene synthase 1 from Phyla dulcis (Aztec sweet herb).